A 340-amino-acid chain; its full sequence is Phosphate acyltransferase (340 aa).

Residues 285–340 (WRQSGRPARHRGQEPRRHRQPRFWLCHRRGRRRSPRQRNRTHPGTGQPPAGCAGAR) form a disordered region. Over residues 300 to 325 (RRHRQPRFWLCHRRGRRRSPRQRNRT) the composition is skewed to basic residues.

It belongs to the PlsX family. As to quaternary structure, homodimer. Probably interacts with PlsY.

The protein resides in the cytoplasm. It catalyses the reaction a fatty acyl-[ACP] + phosphate = an acyl phosphate + holo-[ACP]. Its pathway is lipid metabolism; phospholipid metabolism. Catalyzes the reversible formation of acyl-phosphate (acyl-PO(4)) from acyl-[acyl-carrier-protein] (acyl-ACP). This enzyme utilizes acyl-ACP as fatty acyl donor, but not acyl-CoA. This is Phosphate acyltransferase from Laribacter hongkongensis (strain HLHK9).